Consider the following 308-residue polypeptide: Coenzyme PQQ synthesis protein B (308 aa).

This sequence belongs to the PqqB family.

Its pathway is cofactor biosynthesis; pyrroloquinoline quinone biosynthesis. May be involved in the transport of PQQ or its precursor to the periplasm. The chain is Coenzyme PQQ synthesis protein B from Klebsiella pneumoniae (strain 342).